The primary structure comprises 155 residues: 6,7-dimethyl-8-ribityllumazine synthase (155 aa).

Residues Phe-23, 57 to 59, and 80 to 82 each bind 5-amino-6-(D-ribitylamino)uracil; these read AFE and AVI. (2S)-2-hydroxy-3-oxobutyl phosphate is bound at residue 85-86; the sequence is AT. Catalysis depends on His-88, which acts as the Proton donor. Tyr-113 contacts 5-amino-6-(D-ribitylamino)uracil. Arg-127 provides a ligand contact to (2S)-2-hydroxy-3-oxobutyl phosphate.

It belongs to the DMRL synthase family.

The enzyme catalyses (2S)-2-hydroxy-3-oxobutyl phosphate + 5-amino-6-(D-ribitylamino)uracil = 6,7-dimethyl-8-(1-D-ribityl)lumazine + phosphate + 2 H2O + H(+). It functions in the pathway cofactor biosynthesis; riboflavin biosynthesis; riboflavin from 2-hydroxy-3-oxobutyl phosphate and 5-amino-6-(D-ribitylamino)uracil: step 1/2. Functionally, catalyzes the formation of 6,7-dimethyl-8-ribityllumazine by condensation of 5-amino-6-(D-ribitylamino)uracil with 3,4-dihydroxy-2-butanone 4-phosphate. This is the penultimate step in the biosynthesis of riboflavin. The sequence is that of 6,7-dimethyl-8-ribityllumazine synthase from Moorella thermoacetica (strain ATCC 39073 / JCM 9320).